Reading from the N-terminus, the 82-residue chain is Ferredoxin (82 aa).

The 29-residue stretch at 3 to 31 (KYTIVDKDTCIACGACGAAAPDIYDYDDE) folds into the 4Fe-4S ferredoxin-type domain. Cys12, Cys15, Cys18, and Cys62 together coordinate [4Fe-4S] cluster.

The cofactor is [4Fe-4S] cluster.

Its function is as follows. Ferredoxins are iron-sulfur proteins that transfer electrons in a wide variety of metabolic reactions. This ferredoxin may act as a phosphodonor to cytochrome P450 BioI. This is Ferredoxin (fer) from Bacillus subtilis (strain 168).